The primary structure comprises 298 residues: Heme A synthase (298 aa).

The Cytoplasmic segment spans residues 1–6 (MHRSLK). The chain crosses the membrane as a helical span at residues 7–27 (IFGTLTSIGMVIVLMQGALVT). At 28 to 62 (KTESGEGCGATWPLCFGEVIPTNPAIETIIEYSHR) the chain is on the extracellular side. Cys35 and Cys42 are disulfide-bonded. Residue Glu58 is part of the active site. His61 is a heme o binding site. A helical membrane pass occupies residues 63–83 (IVSGLLGAMVIILAIWAWRKL). The Cytoplasmic segment spans residues 84-92 (SHIRETKVM). The chain crosses the membrane as a helical span at residues 93–113 (AILAVLFIIFQGLLGAGAVVF). At 114 to 117 (GQSH) the chain is on the extracellular side. The helical transmembrane segment at 118 to 138 (AILALHFGISAISLATVVLLT) threads the bilayer. His123 is a heme o binding site. The Cytoplasmic segment spans residues 139–158 (TLAFEDGKPNPPALIVKKGY). The helical transmembrane segment at 159 to 179 (KGYILAVFAYCYAVIYTGAYV) threads the bilayer. Over 180–209 (KHTQATLACGDFPLCNGQWIPMLSGPVGAH) the chain is Extracellular. An intrachain disulfide couples Cys188 to Cys194. The chain crosses the membrane as a helical span at residues 210-230 (FFHRVAGTLLLILLVVALIWT). A heme b-binding site is contributed by His212. At 231 to 244 (LRKYSHYRSLVWTH) the chain is on the cytoplasmic side. A helical transmembrane segment spans residues 245–265 (ILCVILVLTQYATGISIVLTG). Over 266–271 (NELFVA) the chain is Extracellular. The chain crosses the membrane as a helical span at residues 272-292 (MMHALIVSILFTTLCYIVMIL). Residue His274 participates in heme b binding. Residues 293 to 298 (SRNKAV) are Cytoplasmic-facing.

It belongs to the COX15/CtaA family. Type 1 subfamily. Interacts with CtaB. Heme b is required as a cofactor.

It is found in the cell membrane. It catalyses the reaction Fe(II)-heme o + 2 A + H2O = Fe(II)-heme a + 2 AH2. It functions in the pathway porphyrin-containing compound metabolism; heme A biosynthesis; heme A from heme O: step 1/1. In terms of biological role, catalyzes the conversion of heme O to heme A by two successive hydroxylations of the methyl group at C8. The first hydroxylation forms heme I, the second hydroxylation results in an unstable dihydroxymethyl group, which spontaneously dehydrates, resulting in the formyl group of heme A. The protein is Heme A synthase of Halalkalibacterium halodurans (strain ATCC BAA-125 / DSM 18197 / FERM 7344 / JCM 9153 / C-125) (Bacillus halodurans).